Consider the following 2543-residue polypeptide: Zinc finger FYVE domain-containing protein 26 (2543 aa).

The residue at position 297 (serine 297) is a Phosphoserine. Disordered regions lie at residues 523 to 545, 609 to 636, 699 to 722, and 744 to 820; these read ECRD…SLSS, GLLG…GCQE, LSSH…SRDG, and VTSN…GRLQ. Serine 615, serine 619, and serine 703 each carry phosphoserine. Positions 699–710 are enriched in basic and acidic residues; the sequence is LSSHSPPEKPKL. Residues 767–776 show a composition bias toward basic residues; it reads SLRRGRRTRR. Positions 786–806 are enriched in low complexity; the sequence is SNPSLESTSSELSTSTSEGSL. Serine 802 bears the Phosphoserine mark. The stretch at 870–897 forms a coiled coil; it reads MFMERYQEVIQELSRVEHKIENQNSDGG. The disordered stretch occupies residues 1272–1299; that stretch reads LSTLSSPKPTGNSTLERKPHSSPRDSSL. Over residues 1273-1285 the composition is skewed to polar residues; that stretch reads STLSSPKPTGNST. A phosphoserine mark is found at serine 1744, serine 1765, serine 1784, and serine 1786. The segment at 1780–1812 is disordered; the sequence is STIHSPSPRERSFPESQPPPEFVPPATPPGRPQ. Residues 1795-1810 are compositionally biased toward pro residues; it reads SQPPPEFVPPATPPGR. The FYVE-type zinc-finger motif lies at 1816-1876; sequence DESASICMVC…VCDQCYSYYN (61 aa). Cysteine 1822, cysteine 1825, cysteine 1839, cysteine 1842, cysteine 1847, cysteine 1850, cysteine 1868, and cysteine 1871 together coordinate Zn(2+).

The protein belongs to the ZFYVE26 family. Interacts with AP5Z1, AP5B1, AP5S1 and SPG11. Interacts with TTC19 and KIF13A.

It localises to the cytoplasm. Its subcellular location is the cytoskeleton. It is found in the microtubule organizing center. The protein resides in the centrosome. The protein localises to the midbody. Phosphatidylinositol 3-phosphate-binding protein required for the abscission step in cytokinesis: recruited to the midbody during cytokinesis and acts as a regulator of abscission. May also be required for efficient homologous recombination DNA double-strand break repair. This Ailuropoda melanoleuca (Giant panda) protein is Zinc finger FYVE domain-containing protein 26 (ZFYVE26).